Consider the following 150-residue polypeptide: Putative pre-16S rRNA nuclease (150 aa).

Belongs to the YqgF nuclease family.

It localises to the cytoplasm. Could be a nuclease involved in processing of the 5'-end of pre-16S rRNA. The polypeptide is Putative pre-16S rRNA nuclease (Chlamydia felis (strain Fe/C-56) (Chlamydophila felis)).